The following is a 526-amino-acid chain: Bifunctional purine biosynthesis protein PurH (526 aa).

One can recognise an MGS-like domain in the interval 1-148 (MSLNNIIKNA…KNYKDVIVIV (148 aa)).

This sequence belongs to the PurH family.

It carries out the reaction (6R)-10-formyltetrahydrofolate + 5-amino-1-(5-phospho-beta-D-ribosyl)imidazole-4-carboxamide = 5-formamido-1-(5-phospho-D-ribosyl)imidazole-4-carboxamide + (6S)-5,6,7,8-tetrahydrofolate. It catalyses the reaction IMP + H2O = 5-formamido-1-(5-phospho-D-ribosyl)imidazole-4-carboxamide. The protein operates within purine metabolism; IMP biosynthesis via de novo pathway; 5-formamido-1-(5-phospho-D-ribosyl)imidazole-4-carboxamide from 5-amino-1-(5-phospho-D-ribosyl)imidazole-4-carboxamide (10-formyl THF route): step 1/1. It functions in the pathway purine metabolism; IMP biosynthesis via de novo pathway; IMP from 5-formamido-1-(5-phospho-D-ribosyl)imidazole-4-carboxamide: step 1/1. This Buchnera aphidicola subsp. Schizaphis graminum (strain Sg) protein is Bifunctional purine biosynthesis protein PurH.